The following is a 310-amino-acid chain: MFKTEPFIEESIEEIRKQIDNRRTIIALSGGVDSSVAAVLADRAIGDKLLAVYVDTGLMRKNESEEIWKIFKEQMGLNLKIVEAKDIFLKELEGVIDPEEKRKIIGRLFIEVFEKVAEEQGEEVLVQGTIAPDWIESEGQIKTHHNIALPGGMVLDVVEPLRELYKDEVRLLAEALGLPDQIAHRQPFPGPGLAVRILGEITDEKLAICKEANFIVSEEIEKTELKNELWQYFAAVLDTKATGVKGDIRDYNWVVALRFVSSLDAMTAHTPEIPFDLIKRISKRITSEIPNVTRVVLDVTDKPPATIEFE.

Residues 2 to 185 (FKTEPFIEES…LGLPDQIAHR (184 aa)) enclose the GMPS ATP-PPase domain. Residue 29-35 (SGGVDSS) coordinates ATP.

In terms of assembly, heterodimer composed of a glutamine amidotransferase subunit (A) and a GMP-binding subunit (B).

It carries out the reaction XMP + L-glutamine + ATP + H2O = GMP + L-glutamate + AMP + diphosphate + 2 H(+). Its pathway is purine metabolism; GMP biosynthesis; GMP from XMP (L-Gln route): step 1/1. Functionally, catalyzes the synthesis of GMP from XMP. This chain is GMP synthase [glutamine-hydrolyzing] subunit B, found in Methanococcus maripaludis (strain C7 / ATCC BAA-1331).